The sequence spans 880 residues: Interference hedgehog (880 aa).

An N-terminal signal peptide occupies residues M1 to A20. Residues I21 to T703 lie on the Extracellular side of the membrane. 4 consecutive Ig-like C2-type domains span residues P45–L142, P132–Q232, P252–V340, and P346–N432. Intrachain disulfides connect C68-C126, C173-C220, C276-C324, and C367-C414. N-linked (GlcNAc...) asparagine glycosylation is found at N102 and N209. Residues G426–V467 are disordered. Fibronectin type-III domains lie at P461 to G567 and V575 to P670. N466 carries an N-linked (GlcNAc...) asparagine glycan. Heparin contacts are provided by R497, K501, K503, and R541. N557 carries N-linked (GlcNAc...) asparagine glycosylation. The interval L662–N697 is disordered. Polar residues-rich tracts occupy residues G665–P678 and T688–N697. N693 carries N-linked (GlcNAc...) asparagine glycosylation. Residues G704 to C724 traverse the membrane as a helical segment. Topologically, residues R725 to V880 are cytoplasmic. Disordered regions lie at residues T728–R762 and Q775–V880. Composition is skewed to low complexity over residues R823–N837 and S864–V880.

This sequence belongs to the immunoglobulin superfamily. IHOG family. Homodimer. Heterotetramer; 2 iHog chains bind 2 hh chains when facilitated by heparin, heparin is required to promote high-affinity interactions between hh and iHog.

It is found in the membrane. Functionally, mediates response to the active Hedgehog (Hh) protein signal in embryos, functioning upstream or at the level of patched (ptc). The chain is Interference hedgehog from Drosophila sechellia (Fruit fly).